Here is a 434-residue protein sequence, read N- to C-terminus: Trigger factor (434 aa).

The PPIase FKBP-type domain maps to 161–246 (EDRATLDFTG…LKKVEVRELP (86 aa)).

This sequence belongs to the FKBP-type PPIase family. Tig subfamily.

It is found in the cytoplasm. It catalyses the reaction [protein]-peptidylproline (omega=180) = [protein]-peptidylproline (omega=0). In terms of biological role, involved in protein export. Acts as a chaperone by maintaining the newly synthesized protein in an open conformation. Functions as a peptidyl-prolyl cis-trans isomerase. The sequence is that of Trigger factor from Yersinia enterocolitica serotype O:8 / biotype 1B (strain NCTC 13174 / 8081).